The sequence spans 482 residues: UDP-N-acetylmuramoyl-L-alanyl-D-glutamate--2,6-diaminopimelate ligase (482 aa).

Position 24 (S24) interacts with UDP-N-acetyl-alpha-D-muramoyl-L-alanyl-D-glutamate. Position 105–111 (105–111) interacts with ATP; it reads GTNGKTT. UDP-N-acetyl-alpha-D-muramoyl-L-alanyl-D-glutamate-binding positions include 147–148, S174, Q180, and R182; that span reads TT. K214 carries the post-translational modification N6-carboxylysine. Residues R378, 402 to 405, G453, and E457 contribute to the meso-2,6-diaminopimelate site; that span reads DNPR. The short motif at 402 to 405 is the Meso-diaminopimelate recognition motif element; that stretch reads DNPR.

Belongs to the MurCDEF family. MurE subfamily. The cofactor is Mg(2+). Carboxylation is probably crucial for Mg(2+) binding and, consequently, for the gamma-phosphate positioning of ATP.

It is found in the cytoplasm. The catalysed reaction is UDP-N-acetyl-alpha-D-muramoyl-L-alanyl-D-glutamate + meso-2,6-diaminopimelate + ATP = UDP-N-acetyl-alpha-D-muramoyl-L-alanyl-gamma-D-glutamyl-meso-2,6-diaminopimelate + ADP + phosphate + H(+). It functions in the pathway cell wall biogenesis; peptidoglycan biosynthesis. In terms of biological role, catalyzes the addition of meso-diaminopimelic acid to the nucleotide precursor UDP-N-acetylmuramoyl-L-alanyl-D-glutamate (UMAG) in the biosynthesis of bacterial cell-wall peptidoglycan. The sequence is that of UDP-N-acetylmuramoyl-L-alanyl-D-glutamate--2,6-diaminopimelate ligase from Lawsonia intracellularis (strain PHE/MN1-00).